A 381-amino-acid chain; its full sequence is 1-deoxy-D-xylulose 5-phosphate reductoisomerase (381 aa).

Residues Thr-10, Gly-11, Ser-12, Ile-13, and Asn-120 each coordinate NADPH. A 1-deoxy-D-xylulose 5-phosphate-binding site is contributed by Lys-121. Glu-122 provides a ligand contact to NADPH. Mn(2+) is bound at residue Asp-146. 1-deoxy-D-xylulose 5-phosphate contacts are provided by Ser-147, Glu-148, Ser-172, and His-195. Glu-148 serves as a coordination point for Mn(2+). Position 201 (Gly-201) interacts with NADPH. Residues Ser-208, Asn-213, Lys-214, and Glu-217 each coordinate 1-deoxy-D-xylulose 5-phosphate. Glu-217 lines the Mn(2+) pocket.

This sequence belongs to the DXR family. Mg(2+) is required as a cofactor. The cofactor is Mn(2+).

It carries out the reaction 2-C-methyl-D-erythritol 4-phosphate + NADP(+) = 1-deoxy-D-xylulose 5-phosphate + NADPH + H(+). It functions in the pathway isoprenoid biosynthesis; isopentenyl diphosphate biosynthesis via DXP pathway; isopentenyl diphosphate from 1-deoxy-D-xylulose 5-phosphate: step 1/6. In terms of biological role, catalyzes the NADPH-dependent rearrangement and reduction of 1-deoxy-D-xylulose-5-phosphate (DXP) to 2-C-methyl-D-erythritol 4-phosphate (MEP). The sequence is that of 1-deoxy-D-xylulose 5-phosphate reductoisomerase from Thermodesulfovibrio yellowstonii (strain ATCC 51303 / DSM 11347 / YP87).